The chain runs to 278 residues: MKFAKGHGTENDFVIVEGTGPLPPEKVVALCDRRAGIGADGVLRIIRAGELLASGEIDELAPGINADDWFMDYRNADGSVAEMCGNGTRVFAHWVRSRGLLEEDTFTVGTRAGAKQVTVHSFSETEAEVSVEMGPAQVLGVSTASMAGESFAGLGVDMGNPHLAAVIPGLTAEDLAAKRLEQPVFDADFFPAGVNVELVTPLCDGVIHMRVFERGSGETRSCGTGTVAAACAALADASQVTGHVRVIVPGGEVEVEITEDGSTLTGPSRIVATGETSL.

The substrate site is built by asparagine 11 and asparagine 75. The Proton donor role is filled by cysteine 84. Substrate-binding positions include 85 to 86, asparagine 160, asparagine 195, and 213 to 214; these read GN and ER. The active-site Proton acceptor is cysteine 222. Position 223 to 224 (223 to 224) interacts with substrate; sequence GT.

This sequence belongs to the diaminopimelate epimerase family. Homodimer.

Its subcellular location is the cytoplasm. The enzyme catalyses (2S,6S)-2,6-diaminopimelate = meso-2,6-diaminopimelate. It functions in the pathway amino-acid biosynthesis; L-lysine biosynthesis via DAP pathway; DL-2,6-diaminopimelate from LL-2,6-diaminopimelate: step 1/1. Its function is as follows. Catalyzes the stereoinversion of LL-2,6-diaminopimelate (L,L-DAP) to meso-diaminopimelate (meso-DAP), a precursor of L-lysine and an essential component of the bacterial peptidoglycan. This Corynebacterium aurimucosum (strain ATCC 700975 / DSM 44827 / CIP 107346 / CN-1) (Corynebacterium nigricans) protein is Diaminopimelate epimerase.